A 284-amino-acid chain; its full sequence is ELMO domain-containing protein B (284 aa).

One can recognise an ELMO domain in the interval 124–276 (EHEASLERLW…EFETKISQNS (153 aa)).

The chain is ELMO domain-containing protein B (elmoB) from Dictyostelium discoideum (Social amoeba).